Consider the following 434-residue polypeptide: Serine hydroxymethyltransferase (434 aa).

Residues L133 and 137–139 (GHL) each bind (6S)-5,6,7,8-tetrahydrofolate. K242 is modified (N6-(pyridoxal phosphate)lysine).

The protein belongs to the SHMT family. In terms of assembly, homodimer. It depends on pyridoxal 5'-phosphate as a cofactor.

It is found in the cytoplasm. The enzyme catalyses (6R)-5,10-methylene-5,6,7,8-tetrahydrofolate + glycine + H2O = (6S)-5,6,7,8-tetrahydrofolate + L-serine. Its pathway is one-carbon metabolism; tetrahydrofolate interconversion. It participates in amino-acid biosynthesis; glycine biosynthesis; glycine from L-serine: step 1/1. In terms of biological role, catalyzes the reversible interconversion of serine and glycine with tetrahydrofolate (THF) serving as the one-carbon carrier. This reaction serves as the major source of one-carbon groups required for the biosynthesis of purines, thymidylate, methionine, and other important biomolecules. Also exhibits THF-independent aldolase activity toward beta-hydroxyamino acids, producing glycine and aldehydes, via a retro-aldol mechanism. The chain is Serine hydroxymethyltransferase from Caulobacter sp. (strain K31).